A 249-amino-acid polypeptide reads, in one-letter code: Metal-staphylopine import system ATP-binding protein CntF (249 aa).

The ABC transporter domain occupies 2-244; it reads IKVTDVEKSY…DNAYTRELIE (243 aa). 42–49 is an ATP binding site; it reads GESGSGKS.

Belongs to the ABC transporter superfamily. As to quaternary structure, the complex is composed of two ATP-binding proteins (CntD and CntF), two transmembrane proteins (CntB and CntC) and a solute-binding protein (CntA).

It is found in the cell membrane. In terms of biological role, part of the ABC transporter complex CntABCDF (Opp1) involved in the uptake of metal in complex with the metallophore staphylopine (StP). May be involved in the import of a large array of divalent metals ions such as nickel, cobalt, zinc, copper and iron. Probably responsible for energy coupling to the transport system. The polypeptide is Metal-staphylopine import system ATP-binding protein CntF (Staphylococcus aureus (strain Mu50 / ATCC 700699)).